The primary structure comprises 1188 residues: Integrin alpha-11 (1188 aa).

Residues 1–22 (MDFPRGLLVAWTLSLWPGFTDT) form the signal peptide. Residues 23–1141 (FNMDTRNPRV…ISKQEDWQVP (1119 aa)) are Extracellular-facing. FG-GAP repeat units follow at residues 24-85 (NMDT…NCTK) and 91-151 (VTLS…FSKT). A disulfide bond links Cys-76 and Cys-83. Asn-82 and Asn-95 each carry an N-linked (GlcNAc...) asparagine glycan. Intrachain disulfides connect Cys-121–Cys-139 and Cys-129–Cys-159. The 182-residue stretch at 164 to 345 (DIVIVLDGSN…AALKDIVDAL (182 aa)) folds into the VWFA domain. 5 N-linked (GlcNAc...) asparagine glycosylation sites follow: Asn-291, Asn-331, Asn-358, Asn-449, and Asn-462. FG-GAP repeat units follow at residues 355–406 (TNKN…VIPH), 411–461 (LKEF…SMHN), 462–527 (NRSL…RFVY), 528–586 (NGTL…NILK), and 590–650 (QRIT…FEPS). Ca(2+) is bound by residues Asp-488, Asn-490, Asp-492, and Asp-496. N-linked (GlcNAc...) asparagine glycosylation is present at Asn-528. Ca(2+) is bound by residues Asp-551, Asn-553, Asp-555, Asp-559, Asp-613, Asn-615, Asp-617, and Asp-621. N-linked (GlcNAc...) asparagine glycosylation is present at Asn-642. Cystine bridges form between Cys-659-Cys-668, Cys-674-Cys-729, and Cys-781-Cys-787. The N-linked (GlcNAc...) asparagine glycan is linked to Asn-694. An N-linked (GlcNAc...) asparagine glycan is attached at Asn-857. A disulfide bridge links Cys-881 with Cys-893. Residues Asn-894, Asn-973, Asn-1031, Asn-1039, and Asn-1059 are each glycosylated (N-linked (GlcNAc...) asparagine). Residues 1142 to 1164 (IWIIVGSTLGGLLLLALLVLALW) traverse the membrane as a helical segment. Over 1165–1188 (KLGFFKSAKRKREPGLGPIPKELK) the chain is Cytoplasmic.

This sequence belongs to the integrin alpha chain family. Heterodimer of an alpha and a beta subunit. Alpha-11 associates with beta-1. Interacts with RAB21.

The protein localises to the membrane. Functionally, integrin alpha-11/beta-1 is a receptor for collagen. The protein is Integrin alpha-11 (Itga11) of Mus musculus (Mouse).